A 369-amino-acid polypeptide reads, in one-letter code: Spore membrane assembly protein 2 (369 aa).

Over M1–R6 the chain is Cytoplasmic. The chain crosses the membrane as a helical span at residues L7–A27. Residues T28–N220 are Lumenal-facing. A helical transmembrane segment spans residues G221 to V241. At S242–S265 the chain is on the cytoplasmic side. A helical transmembrane segment spans residues S266–L286. The Lumenal portion of the chain corresponds to K287–G319. A helical membrane pass occupies residues F320 to A340. Residues A341–K369 lie on the Cytoplasmic side of the membrane. Positions P348–K369 are disordered.

The protein belongs to the SMA2 family.

Its subcellular location is the prospore membrane. It localises to the endoplasmic reticulum. Functionally, involved in spore and ascus formation. Required for the efficient assembly of the precursors of the prospore membrane to a continuous prospore membrane. This Saccharomyces cerevisiae (strain ATCC 204508 / S288c) (Baker's yeast) protein is Spore membrane assembly protein 2 (SMA2).